A 512-amino-acid polypeptide reads, in one-letter code: ATP synthase subunit alpha (512 aa).

169 to 176 (GDRQTGKT) contributes to the ATP binding site.

Belongs to the ATPase alpha/beta chains family. As to quaternary structure, F-type ATPases have 2 components, CF(1) - the catalytic core - and CF(0) - the membrane proton channel. CF(1) has five subunits: alpha(3), beta(3), gamma(1), delta(1), epsilon(1). CF(0) has three main subunits: a(1), b(2) and c(9-12). The alpha and beta chains form an alternating ring which encloses part of the gamma chain. CF(1) is attached to CF(0) by a central stalk formed by the gamma and epsilon chains, while a peripheral stalk is formed by the delta and b chains.

It localises to the cell inner membrane. The catalysed reaction is ATP + H2O + 4 H(+)(in) = ADP + phosphate + 5 H(+)(out). Produces ATP from ADP in the presence of a proton gradient across the membrane. The alpha chain is a regulatory subunit. This is ATP synthase subunit alpha from Rickettsia canadensis (strain McKiel).